The following is a 168-amino-acid chain: UPF0478 protein SH1183 (168 aa).

A helical membrane pass occupies residues 7–27 (IAGIIAAIAFLVLCIGIVVVL). The disordered stretch occupies residues 144 to 168 (YRNTSVGNDANHSNENYTTNVEKNF).

The protein belongs to the UPF0478 family.

The protein resides in the cell membrane. The polypeptide is UPF0478 protein SH1183 (Staphylococcus haemolyticus (strain JCSC1435)).